A 463-amino-acid chain; its full sequence is 23S rRNA (uracil(1939)-C(5))-methyltransferase RlmD (463 aa).

One can recognise a TRAM domain in the interval 8–76 (RSKSATVYTF…KRFEEGELIE (69 aa)). Cys-90, Cys-96, Cys-99, and Cys-178 together coordinate [4Fe-4S] cluster. 6 residues coordinate S-adenosyl-L-methionine: Gln-288, Phe-317, Asn-322, Glu-341, Asp-368, and Asp-389. Cys-415 functions as the Nucleophile in the catalytic mechanism.

This sequence belongs to the class I-like SAM-binding methyltransferase superfamily. RNA M5U methyltransferase family. RlmD subfamily.

The enzyme catalyses uridine(1939) in 23S rRNA + S-adenosyl-L-methionine = 5-methyluridine(1939) in 23S rRNA + S-adenosyl-L-homocysteine + H(+). Its function is as follows. Catalyzes the formation of 5-methyl-uridine at position 1939 (m5U1939) in 23S rRNA. The sequence is that of 23S rRNA (uracil(1939)-C(5))-methyltransferase RlmD from Acinetobacter baylyi (strain ATCC 33305 / BD413 / ADP1).